We begin with the raw amino-acid sequence, 305 residues long: UDP-3-O-acyl-N-acetylglucosamine deacetylase (305 aa).

His-78, His-237, and Asp-241 together coordinate Zn(2+). The active-site Proton donor is His-264.

Belongs to the LpxC family. Zn(2+) serves as cofactor.

The enzyme catalyses a UDP-3-O-[(3R)-3-hydroxyacyl]-N-acetyl-alpha-D-glucosamine + H2O = a UDP-3-O-[(3R)-3-hydroxyacyl]-alpha-D-glucosamine + acetate. The protein operates within glycolipid biosynthesis; lipid IV(A) biosynthesis; lipid IV(A) from (3R)-3-hydroxytetradecanoyl-[acyl-carrier-protein] and UDP-N-acetyl-alpha-D-glucosamine: step 2/6. Functionally, catalyzes the hydrolysis of UDP-3-O-myristoyl-N-acetylglucosamine to form UDP-3-O-myristoylglucosamine and acetate, the committed step in lipid A biosynthesis. The polypeptide is UDP-3-O-acyl-N-acetylglucosamine deacetylase (Burkholderia pseudomallei (strain 668)).